We begin with the raw amino-acid sequence, 485 residues long: Dynein axonemal assembly factor 3 (485 aa).

The protein belongs to the DNAAF3 family.

It localises to the cytoplasm. The protein localises to the dynein axonemal particle. In terms of biological role, required for the assembly of axonemal inner and outer dynein arms. Involved in preassembly of dyneins into complexes before their transport into cilia. This Xenopus laevis (African clawed frog) protein is Dynein axonemal assembly factor 3 (dnaaf3).